The sequence spans 503 residues: Lanosterol 14-alpha demethylase (503 aa).

The helical transmembrane segment at 24-44 (GNLLSTLLIACAFTLSLVYLF) threads the bilayer. C449 serves as a coordination point for heme.

Belongs to the cytochrome P450 family. The cofactor is heme. In terms of processing, ubiquitinated by MARCHF6, leading to proteasomal degradation.

The protein localises to the endoplasmic reticulum membrane. It is found in the microsome membrane. It catalyses the reaction a 14alpha-methyl steroid + 3 reduced [NADPH--hemoprotein reductase] + 3 O2 = a Delta(14) steroid + formate + 3 oxidized [NADPH--hemoprotein reductase] + 4 H2O + 4 H(+). The enzyme catalyses lanosterol + 3 reduced [NADPH--hemoprotein reductase] + 3 O2 = 4,4-dimethyl-5alpha-cholesta-8,14,24-trien-3beta-ol + formate + 3 oxidized [NADPH--hemoprotein reductase] + 4 H2O + 4 H(+). It carries out the reaction 24,25-dihydrolanosterol + 3 reduced [NADPH--hemoprotein reductase] + 3 O2 = 4,4-dimethyl-8,14-cholestadien-3beta-ol + formate + 3 oxidized [NADPH--hemoprotein reductase] + 4 H2O + 4 H(+). The catalysed reaction is a 14alpha-methyl steroid + reduced [NADPH--hemoprotein reductase] + O2 = a 14alpha-hydroxymethyl steroid + oxidized [NADPH--hemoprotein reductase] + H2O + H(+). It catalyses the reaction a 14alpha-hydroxymethyl steroid + reduced [NADPH--hemoprotein reductase] + O2 = a 14alpha-formyl steroid + oxidized [NADPH--hemoprotein reductase] + 2 H2O + H(+). The enzyme catalyses a 14alpha-formyl steroid + reduced [NADPH--hemoprotein reductase] + O2 = a Delta(14) steroid + formate + oxidized [NADPH--hemoprotein reductase] + H2O + 2 H(+). It carries out the reaction lanosterol + reduced [NADPH--hemoprotein reductase] + O2 = 32-hydroxylanosterol + oxidized [NADPH--hemoprotein reductase] + H2O + H(+). The catalysed reaction is 32-hydroxylanosterol + reduced [NADPH--hemoprotein reductase] + O2 = 32-oxolanosterol + oxidized [NADPH--hemoprotein reductase] + 2 H2O + H(+). It catalyses the reaction 32-oxolanosterol + reduced [NADPH--hemoprotein reductase] + O2 = 4,4-dimethyl-5alpha-cholesta-8,14,24-trien-3beta-ol + formate + oxidized [NADPH--hemoprotein reductase] + H2O + 2 H(+). The enzyme catalyses 24,25-dihydrolanosterol + reduced [NADPH--hemoprotein reductase] + O2 = 32-hydroxy-24,25-dihydrolanosterol + oxidized [NADPH--hemoprotein reductase] + H2O + H(+). It carries out the reaction 32-hydroxy-24,25-dihydrolanosterol + reduced [NADPH--hemoprotein reductase] + O2 = 32-oxo-24,25-dihydrolanosterol + oxidized [NADPH--hemoprotein reductase] + 2 H2O + H(+). The catalysed reaction is 32-oxo-24,25-dihydrolanosterol + reduced [NADPH--hemoprotein reductase] + O2 = 4,4-dimethyl-8,14-cholestadien-3beta-ol + formate + oxidized [NADPH--hemoprotein reductase] + H2O + 2 H(+). It participates in steroid biosynthesis; zymosterol biosynthesis; zymosterol from lanosterol: step 1/6. Inhibited by azalanstat. Inhibited by azole antifungal agents ketoconazole, itraconazole and fluconazole. Functionally, sterol 14alpha-demethylase that plays a critical role in the cholesterol biosynthesis pathway, being cholesterol the major sterol component in mammalian membranes as well as a precursor for bile acid and steroid hormone synthesis. Cytochrome P450 monooxygenase that catalyzes the three-step oxidative removal of the 14alpha-methyl group (C-32) of sterols such as lanosterol (lanosta-8,24-dien-3beta-ol) and 24,25-dihydrolanosterol (DHL) in the form of formate, and converts the sterols to 4,4-dimethyl-5alpha-cholesta-8,14,24-trien-3beta-ol and 4,4-dimethyl-8,14-cholestadien-3beta-ol, respectively, which are intermediates of cholesterol biosynthesis. Can also demethylate substrates not intrinsic to mammals, such as eburicol (24-methylene-24,25-dihydrolanosterol), but at a lower rate than DHL. In Rattus norvegicus (Rat), this protein is Lanosterol 14-alpha demethylase.